The chain runs to 170 residues: Putative pre-16S rRNA nuclease (170 aa).

This sequence belongs to the YqgF nuclease family.

It localises to the cytoplasm. In terms of biological role, could be a nuclease involved in processing of the 5'-end of pre-16S rRNA. The chain is Putative pre-16S rRNA nuclease from Synechococcus sp. (strain JA-2-3B'a(2-13)) (Cyanobacteria bacterium Yellowstone B-Prime).